A 53-amino-acid polypeptide reads, in one-letter code: Light-harvesting protein B-800/850 alpha chain (53 aa).

Residues 1–14 (MNQGKIWTVVNPSV) lie on the Cytoplasmic side of the membrane. The helical transmembrane segment at 15-35 (GLPLLLGSVTVIAILVHAAVL) threads the bilayer. His31 contributes to the a bacteriochlorophyll binding site. At 36–53 (SHTTWFPAYWQGGLKKAA) the chain is on the periplasmic side.

This sequence belongs to the antenna complex alpha subunit family. In terms of assembly, the core complex is formed by different alpha and beta chains, binding bacteriochlorophyll molecules, and arranged most probably in tetrameric structures disposed around the reaction center. The non-pigmented gamma chains may constitute additional components.

The protein resides in the cell inner membrane. Functionally, antenna complexes are light-harvesting systems, which transfer the excitation energy to the reaction centers. The polypeptide is Light-harvesting protein B-800/850 alpha chain (Rhodoblastus acidophilus (Rhodopseudomonas acidophila)).